Reading from the N-terminus, the 305-residue chain is tRNA pseudouridine synthase B (305 aa).

Asp-39 functions as the Nucleophile in the catalytic mechanism.

Belongs to the pseudouridine synthase TruB family. Type 1 subfamily.

It catalyses the reaction uridine(55) in tRNA = pseudouridine(55) in tRNA. In terms of biological role, responsible for synthesis of pseudouridine from uracil-55 in the psi GC loop of transfer RNAs. This is tRNA pseudouridine synthase B from Staphylococcus aureus (strain MSSA476).